The sequence spans 279 residues: MQTVEKLTTETLEKPLIIAGKKFTSRLMTGTGKYPTIETMQQSIEASKCEIITVAVRRVQTQAPGHKGLAEAIDWQKVWMLPNTAGCQTAEDAVRVARLGREMAKLLGQEDNNFVKLEVIPDSKYLLPDPIGTLQAAEQLIKEGFAVLPYINADPLLAKRLEEAGCSTVMPLGSPIGSGQGIQNAANISIIIDNSTVPVVIDAGIGTPSEATQAMEMGADALLINSAIALAKNPPIMAKAMGMATESGRLAYLAGRIPKKSYATPSSPVTGKINTTTSE.

K116 (schiff-base intermediate with DXP) is an active-site residue. 1-deoxy-D-xylulose 5-phosphate contacts are provided by residues G177, 203 to 204 (AG), and 225 to 226 (NS).

The protein belongs to the ThiG family. Homotetramer. Forms heterodimers with either ThiH or ThiS.

Its subcellular location is the cytoplasm. It carries out the reaction [ThiS sulfur-carrier protein]-C-terminal-Gly-aminoethanethioate + 2-iminoacetate + 1-deoxy-D-xylulose 5-phosphate = [ThiS sulfur-carrier protein]-C-terminal Gly-Gly + 2-[(2R,5Z)-2-carboxy-4-methylthiazol-5(2H)-ylidene]ethyl phosphate + 2 H2O + H(+). It participates in cofactor biosynthesis; thiamine diphosphate biosynthesis. In terms of biological role, catalyzes the rearrangement of 1-deoxy-D-xylulose 5-phosphate (DXP) to produce the thiazole phosphate moiety of thiamine. Sulfur is provided by the thiocarboxylate moiety of the carrier protein ThiS. In vitro, sulfur can be provided by H(2)S. The polypeptide is Thiazole synthase (Trichodesmium erythraeum (strain IMS101)).